The chain runs to 445 residues: Mutanase Pc12g07500 (445 aa).

The signal sequence occupies residues 1-21; it reads MIWKSLFSALAILTHILPALT. Residues N386 and N437 are each glycosylated (N-linked (GlcNAc...) asparagine).

Belongs to the glycosyl hydrolase 71 family. Monomer.

Its subcellular location is the secreted. It catalyses the reaction Endohydrolysis of (1-&gt;3)-alpha-D-glucosidic linkages in isolichenin, pseudonigeran and nigeran.. In terms of biological role, hydrolyzes 1,3-alpha-glucan predominantly into pentasaccharides. May enhance the efficacy of fungal antibiotics by degrading bacterial exopolysaccharides. This is Mutanase Pc12g07500 from Penicillium rubens (strain ATCC 28089 / DSM 1075 / NRRL 1951 / Wisconsin 54-1255) (Penicillium chrysogenum).